The primary structure comprises 700 residues: Polyribonucleotide nucleotidyltransferase (700 aa).

Residues Asp484 and Asp490 each contribute to the Mg(2+) site. Residues 551–610 (PRVIRMVVDPEKIREIIGPGGKTISKIIAETGVKIDIEEDGRLYITASDLRSGERAKQMI) enclose the KH domain. The 69-residue stretch at 620–688 (GEIYLGKVLR…KLGRISLSRK (69 aa)) folds into the S1 motif domain.

The protein belongs to the polyribonucleotide nucleotidyltransferase family. It depends on Mg(2+) as a cofactor.

The protein resides in the cytoplasm. The enzyme catalyses RNA(n+1) + phosphate = RNA(n) + a ribonucleoside 5'-diphosphate. Its function is as follows. Involved in mRNA degradation. Catalyzes the phosphorolysis of single-stranded polyribonucleotides processively in the 3'- to 5'-direction. The chain is Polyribonucleotide nucleotidyltransferase from Thermoanaerobacter pseudethanolicus (strain ATCC 33223 / 39E) (Clostridium thermohydrosulfuricum).